Consider the following 77-residue polypeptide: DNA-directed RNA polymerase subunit omega (77 aa).

It belongs to the RNA polymerase subunit omega family. In cyanobacteria the RNAP catalytic core is composed of 2 alpha, 1 beta, 1 beta', 1 gamma and 1 omega subunit. When a sigma factor is associated with the core the holoenzyme is formed, which can initiate transcription.

It carries out the reaction RNA(n) + a ribonucleoside 5'-triphosphate = RNA(n+1) + diphosphate. In terms of biological role, promotes RNA polymerase assembly. Latches the N- and C-terminal regions of the beta' subunit thereby facilitating its interaction with the beta and alpha subunits. The protein is DNA-directed RNA polymerase subunit omega of Thermosynechococcus vestitus (strain NIES-2133 / IAM M-273 / BP-1).